Reading from the N-terminus, the 1382-residue chain is Ninein-like protein (1382 aa).

EF-hand domains follow at residues 7–42 and 41–76; these read HYVS…LHLE and LEQQ…VLSS. The interval 144 to 164 is disordered; that stretch reads ASLESVESPKSDEEAESTKEA. S148 bears the Phosphoserine mark. Basic and acidic residues predominate over residues 150–164; that stretch reads ESPKSDEEAESTKEA. EF-hand domains are found at residues 196–231 and 233–268; these read TPES…VGLQ and LEKE…HEPA. Positions 246, 248, 250, 252, and 257 each coordinate Ca(2+). Coiled-coil stretches lie at residues 384-424, 484-579, and 616-699; these read QELS…MDDC, AGLR…WARL, and IETE…QLQD. Positions 495-497 match the KEN box motif; it reads KEN. Residues 633-641 carry the D-box motif; sequence RTQLETKVN. Disordered regions lie at residues 857–969 and 982–1006; these read PLAW…ASCR and RARS…GALE. The segment covering 991 to 1004 has biased composition (low complexity); it reads QEQASEQQARAEGA. Residues 1046–1375 adopt a coiled-coil conformation; sequence ETKIALEREK…RALNKLVSRI (330 aa).

As to quaternary structure, interacts with gamma-tubulin and TUBGCP4. Interacts with anaphase promoting complex/cyclosome (APC/C). Interacts with CDC20 and FZR1. Isoform 2 interacts with LCA5 and USH2A. Isoform 2 interacts with DZANK1. In terms of processing, phosphorylated by PLK1 which disrupts its centrosome association and interaction with gamma-tubulin. Post-translationally, ubiquitinated by the APC/C complex leading to its degradation. In terms of tissue distribution, expressed in KYSE-150 esophageal carcinoma, HeLa cervical carcinoma and U2OS osteosarcoma cells. Expression is regulated in a cell cycle-dependent manner and peaks during G2/M phase (at protein level). Expressed in fetal heart, skeletal muscle, liver, lung and cochlea, and in adult brain, testis, kidney and retina.

The protein resides in the cytoplasm. Its subcellular location is the cytoskeleton. The protein localises to the microtubule organizing center. It localises to the centrosome. Functionally, involved in the microtubule organization in interphase cells. Overexpression induces the fragmentation of the Golgi, and causes lysosomes to disperse toward the cell periphery; it also interferes with mitotic spindle assembly. Involved in vesicle transport in photoreceptor cells. May play a role in ovarian carcinogenesis. This Homo sapiens (Human) protein is Ninein-like protein (NINL).